The following is a 558-amino-acid chain: Vanin-like protein 1 (558 aa).

The signal sequence occupies residues 1–22; it reads MSNTWWWLSVVLLILGLMPGMS. In terms of domain architecture, CN hydrolase spans 33 to 299; sequence YTAGVVEFKQ…RAIYVAQVPK (267 aa). Residue asparagine 65 is glycosylated (N-linked (GlcNAc...) asparagine). Glutamate 76 functions as the Proton acceptor in the catalytic mechanism. N-linked (GlcNAc...) asparagine glycosylation is found at asparagine 103, asparagine 120, and asparagine 128. Lysine 171 serves as the catalytic Proton donor. N-linked (GlcNAc...) asparagine glycosylation is present at asparagine 180. Cysteine 203 acts as the Nucleophile in catalysis. N-linked (GlcNAc...) asparagine glycans are attached at residues asparagine 354 and asparagine 379. Residue serine 531 is the site of GPI-anchor amidated serine attachment. Residues 532 to 558 constitute a propeptide, removed in mature form; that stretch reads GSPGLRILGGWLAMPLIILAIARTMSS.

It belongs to the carbon-nitrogen hydrolase superfamily. BTD/VNN family. Expressed in larvae and early pupae. Expressed in third instar larvae.

It is found in the cell membrane. The chain is Vanin-like protein 1 from Drosophila melanogaster (Fruit fly).